Reading from the N-terminus, the 174-residue chain is Gamma-crystallin D (174 aa).

2 Beta/gamma crystallin 'Greek key' domains span residues 2–40 (GKIT…RVDS) and 41–83 (GCWM…RLIP). The segment at 84-87 (HAGS) is connecting peptide. 2 Beta/gamma crystallin 'Greek key' domains span residues 88–128 (HRIR…NVLE) and 129–171 (GCWV…RRVM).

It belongs to the beta/gamma-crystallin family. As to expression, detected in the superior olivary complex and fibers of the ventral aoustic stria of the auditory hindbrain.

In terms of biological role, crystallins are the dominant structural components of the vertebrate eye lens. The chain is Gamma-crystallin D (Crygd) from Rattus norvegicus (Rat).